A 509-amino-acid polypeptide reads, in one-letter code: DAP3-binding cell death enhancer 1 (509 aa).

Residues Met1–Ile23 constitute a mitochondrion transit peptide. 2 disordered regions span residues Gly19 to Asp60 and Val143 to Leu185. The propeptide at Thr24–Gln101 is extended MTS. Positions Lys26–Leu40 are enriched in polar residues. Basic and acidic residues-rich tracts occupy residues Asn46 to Asp60 and Gly156 to Ala168. 7 TPR repeats span residues Ala213 to Val245, Ala246 to Ser278, Lys279 to His313, Ser314 to Leu351, Thr352 to Asp385, Ser386 to Pro423, and Ala470 to Ser498. An SIFI-degron motif is present at residues Leu307–Gln326.

It belongs to the DELE1 family. As to quaternary structure, interacts with DAP3. Interacts (via TPR repeats) with EIF2AK1/HRI; activating the protein kinase activity of EIF2AK1/HRI, thereby promoting the integrated stress response (ISR). In terms of assembly, homooctamer; oligomerization is required to activate EIF2AK1/HRI. Interacts (via TPR repeats) with EIF2AK1/HRI; activating the protein kinase activity of EIF2AK1/HRI, thereby promoting the integrated stress response (ISR). In terms of processing, unstable protein in absence of stress: imported in the mitochondrial matrix following processing by the mitochondrial-processing peptidase (MPP), where it is degraded by LONP1. Stabilized in response to iron deficiency: iron deficiency impairs mitochondrial import, promoting localization at the mitochondrial surface and stabilization. Cleaved by OMA1 in response to mitochondrial stress, generating the DAP3-binding cell death enhancer 1 short form (DELE1(S) or S-DELE1) that accumulates in the cytosol and activates the protein kinase activity of EIF2AK1/HRI. Protein cleavage by OMA1 can take place at different positions, and apparently does not require a specific sequence motif. Ubiquitinated and degraded by the SIFI complex once the mitochondrial stress has been resolved, thereby providing stress response silencing. Within the SIFI complex, UBR4 initiates ubiquitin chain that are further elongated or branched by KCMF1.

It localises to the mitochondrion. The protein localises to the mitochondrion outer membrane. The protein resides in the mitochondrion inner membrane. Its subcellular location is the cytoplasm. It is found in the cytosol. Functionally, protein kinase activator that acts as a key activator of the integrated stress response (ISR) following various stresses, such as iron deficiency, mitochondrial stress or mitochondrial DNA breaks. Detects impaired protein import and processing in mitochondria, activating the ISR. May also required for the induction of death receptor-mediated apoptosis through the regulation of caspase activation. In terms of biological role, protein kinase activator that activates the ISR in response to iron deficiency: iron deficiency impairs mitochondrial import, promoting DELE1 localization at the mitochondrial surface, where it binds and activates EIF2AK1/HRI to trigger the ISR. Protein kinase activator generated by protein cleavage in response to mitochondrial stress, which accumulates in the cytosol and specifically binds to and activates the protein kinase activity of EIF2AK1/HRI. It thereby activates the integrated stress response (ISR): EIF2AK1/HRI activation promotes eIF-2-alpha (EIF2S1) phosphorylation, leading to a decrease in global protein synthesis and the induction of selected genes, including the transcription factor ATF4, the master transcriptional regulator of the ISR. Also acts as an activator of PRKN-independent mitophagy: activates the protein kinase activity of EIF2AK1/HRI in response to mitochondrial damage, promoting eIF-2-alpha (EIF2S1) phosphorylation, leading to mitochondrial localization of EIF2S1 followed by induction of mitophagy. The sequence is that of DAP3-binding cell death enhancer 1 from Rattus norvegicus (Rat).